The primary structure comprises 483 residues: tRNA sulfurtransferase (483 aa).

In terms of domain architecture, THUMP spans proline 62–arginine 166. ATP contacts are provided by residues leucine 184–isoleucine 185, lysine 266, glycine 288, and glutamine 297. Residues cysteine 345 and cysteine 457 are joined by a disulfide bond. Residues leucine 405–proline 483 form the Rhodanese domain. The active-site Cysteine persulfide intermediate is cysteine 457.

The protein belongs to the ThiI family.

The protein resides in the cytoplasm. The catalysed reaction is [ThiI sulfur-carrier protein]-S-sulfanyl-L-cysteine + a uridine in tRNA + 2 reduced [2Fe-2S]-[ferredoxin] + ATP + H(+) = [ThiI sulfur-carrier protein]-L-cysteine + a 4-thiouridine in tRNA + 2 oxidized [2Fe-2S]-[ferredoxin] + AMP + diphosphate. The enzyme catalyses [ThiS sulfur-carrier protein]-C-terminal Gly-Gly-AMP + S-sulfanyl-L-cysteinyl-[cysteine desulfurase] + AH2 = [ThiS sulfur-carrier protein]-C-terminal-Gly-aminoethanethioate + L-cysteinyl-[cysteine desulfurase] + A + AMP + 2 H(+). It functions in the pathway cofactor biosynthesis; thiamine diphosphate biosynthesis. Catalyzes the ATP-dependent transfer of a sulfur to tRNA to produce 4-thiouridine in position 8 of tRNAs, which functions as a near-UV photosensor. Also catalyzes the transfer of sulfur to the sulfur carrier protein ThiS, forming ThiS-thiocarboxylate. This is a step in the synthesis of thiazole, in the thiamine biosynthesis pathway. The sulfur is donated as persulfide by IscS. The chain is tRNA sulfurtransferase from Yersinia pseudotuberculosis serotype IB (strain PB1/+).